Reading from the N-terminus, the 396-residue chain is S-adenosylmethionine synthase (396 aa).

Residue His-16 participates in ATP binding. Asp-18 serves as a coordination point for Mg(2+). Residue Glu-44 coordinates K(+). 2 residues coordinate L-methionine: Glu-57 and Gln-100. Residues 100-110 (QSPDIAQGVDR) are flexible loop. ATP is bound by residues 167–169 (DAK), 233–234 (RF), Asp-242, 248–249 (RK), Ala-265, and Lys-269. Position 242 (Asp-242) interacts with L-methionine. Lys-273 contacts L-methionine.

Belongs to the AdoMet synthase family. As to quaternary structure, homotetramer; dimer of dimers. It depends on Mg(2+) as a cofactor. Requires K(+) as cofactor.

It is found in the cytoplasm. The catalysed reaction is L-methionine + ATP + H2O = S-adenosyl-L-methionine + phosphate + diphosphate. Its pathway is amino-acid biosynthesis; S-adenosyl-L-methionine biosynthesis; S-adenosyl-L-methionine from L-methionine: step 1/1. Its function is as follows. Catalyzes the formation of S-adenosylmethionine (AdoMet) from methionine and ATP. The overall synthetic reaction is composed of two sequential steps, AdoMet formation and the subsequent tripolyphosphate hydrolysis which occurs prior to release of AdoMet from the enzyme. This chain is S-adenosylmethionine synthase, found in Paraburkholderia xenovorans (strain LB400).